A 313-amino-acid polypeptide reads, in one-letter code: Porphobilinogen deaminase (313 aa).

Cys242 bears the S-(dipyrrolylmethanemethyl)cysteine mark.

It belongs to the HMBS family. In terms of assembly, monomer. The cofactor is dipyrromethane.

It carries out the reaction 4 porphobilinogen + H2O = hydroxymethylbilane + 4 NH4(+). It participates in porphyrin-containing compound metabolism; protoporphyrin-IX biosynthesis; coproporphyrinogen-III from 5-aminolevulinate: step 2/4. In terms of biological role, tetrapolymerization of the monopyrrole PBG into the hydroxymethylbilane pre-uroporphyrinogen in several discrete steps. In Pseudomonas fluorescens (strain Pf0-1), this protein is Porphobilinogen deaminase.